A 120-amino-acid chain; its full sequence is Inner membrane protein YidG (120 aa).

Residues 1-21 (MPDSRKARRIADPGLQPERTS) are Cytoplasmic-facing. A helical transmembrane segment spans residues 22–39 (LAWFRTMLGYGALMALAI). The Periplasmic segment spans residues 40-48 (KHNWHQAGM). The helical transmembrane segment at 49–68 (LFWISIGILAIVALILWHYT) threads the bilayer. The Cytoplasmic portion of the chain corresponds to 69–90 (RNRNLMDVTNSDFSQFHVVRDK). The chain crosses the membrane as a helical span at residues 91 to 113 (FLISLAVLSLAILFAVTHIHQLI). The Periplasmic segment spans residues 114–120 (VFIERVA).

It localises to the cell inner membrane. The polypeptide is Inner membrane protein YidG (yidG) (Escherichia coli O157:H7).